The primary structure comprises 250 residues: Cell division protein ZapD (250 aa).

The protein belongs to the ZapD family. Interacts with FtsZ.

It is found in the cytoplasm. Functionally, cell division factor that enhances FtsZ-ring assembly. Directly interacts with FtsZ and promotes bundling of FtsZ protofilaments, with a reduction in FtsZ GTPase activity. This Photorhabdus laumondii subsp. laumondii (strain DSM 15139 / CIP 105565 / TT01) (Photorhabdus luminescens subsp. laumondii) protein is Cell division protein ZapD.